Reading from the N-terminus, the 61-residue chain is Small ribosomal subunit protein uS14B (61 aa).

Zn(2+)-binding residues include Cys24, Cys27, Cys40, and Cys43.

It belongs to the universal ribosomal protein uS14 family. Zinc-binding uS14 subfamily. In terms of assembly, part of the 30S ribosomal subunit. Contacts proteins S3 and S10. The cofactor is Zn(2+).

Functionally, binds 16S rRNA, required for the assembly of 30S particles and may also be responsible for determining the conformation of the 16S rRNA at the A site. The chain is Small ribosomal subunit protein uS14B from Lactococcus lactis subsp. lactis (strain IL1403) (Streptococcus lactis).